We begin with the raw amino-acid sequence, 297 residues long: Probable endonuclease 4 (297 aa).

9 residues coordinate Zn(2+): His-69, His-110, Glu-145, Asp-179, His-182, His-214, Asp-227, His-229, and Glu-259.

Belongs to the AP endonuclease 2 family. Zn(2+) serves as cofactor.

The catalysed reaction is Endonucleolytic cleavage to 5'-phosphooligonucleotide end-products.. Endonuclease IV plays a role in DNA repair. It cleaves phosphodiester bonds at apurinic or apyrimidinic (AP) sites, generating a 3'-hydroxyl group and a 5'-terminal sugar phosphate. This Listeria welshimeri serovar 6b (strain ATCC 35897 / DSM 20650 / CCUG 15529 / CIP 8149 / NCTC 11857 / SLCC 5334 / V8) protein is Probable endonuclease 4.